The sequence spans 188 residues: Elongation factor P (188 aa).

Belongs to the elongation factor P family.

It is found in the cytoplasm. It participates in protein biosynthesis; polypeptide chain elongation. In terms of biological role, involved in peptide bond synthesis. Stimulates efficient translation and peptide-bond synthesis on native or reconstituted 70S ribosomes in vitro. Probably functions indirectly by altering the affinity of the ribosome for aminoacyl-tRNA, thus increasing their reactivity as acceptors for peptidyl transferase. This is Elongation factor P from Pelodictyon phaeoclathratiforme (strain DSM 5477 / BU-1).